A 133-amino-acid chain; its full sequence is MSLTTDPVADFLSRVRNAIKARHQKVDAPASKLKTELARILKEEGYIANYKAVEEEGKKLIRVYLKYGSDNVSPISNVTRISRPGCRVYVGSKEIPRVLGGLGISILTTPKGVMTGRQARKEGVGGEVLCEIY.

The protein belongs to the universal ribosomal protein uS8 family. As to quaternary structure, part of the 30S ribosomal subunit. Contacts proteins S5 and S12.

Functionally, one of the primary rRNA binding proteins, it binds directly to 16S rRNA central domain where it helps coordinate assembly of the platform of the 30S subunit. The protein is Small ribosomal subunit protein uS8 of Koribacter versatilis (strain Ellin345).